Consider the following 678-residue polypeptide: Endoplasmic reticulum membrane-associated RNA degradation protein (678 aa).

A run of 2 helical transmembrane segments spans residues 390–410 (LLAF…LSVF) and 587–607 (VLSL…AVCG).

It is found in the endoplasmic reticulum membrane. Its function is as follows. May play a role in neuronal migration during embryonic development. This Homo sapiens (Human) protein is Endoplasmic reticulum membrane-associated RNA degradation protein (ERMARD).